We begin with the raw amino-acid sequence, 1069 residues long: RE1-silencing transcription factor (1069 aa).

An interaction with SIN3A region spans residues 32–121 (DLHDLSKAEL…SLELSVVEPQ (90 aa)). The interaction with SIN3B stretch occupies residues 43-57 (APQLIMLANVALTGE). A disordered region spans residues 85–104 (SDSEGEGLEESAELKGDPSG). Residues 144-417 (PVAEDKCKNL…KSKHPTCPSK (274 aa)) are interaction with ZFP90. The segment at 158-180 (FRCKPCQYEAESEEQFVHHIRVH) adopts a C2H2-type 1 zinc-finger fold. A required for binding to the neuron-restrictive silencer element region spans residues 200 to 211 (SGASPSEEGEFS). 7 consecutive C2H2-type zinc fingers follow at residues 215-237 (IRCDRCGYNTNRYDHYTAHLKHH), 247-269 (YKCIICTYTTVSEYHWRKHLRNH), 275-297 (YTCSKCNYFSTEKNNYVQHVRTH), 303-325 (YKCELCPYSSSQKTHLTRHMRTH), 331-354 (FKCDQCNYVASNQHEVTRHARQVH), 360-382 (LNCPHCDYKTADRSNFKKHVELH), and 388-411 (FNCPVCDYAASKKCNLQYHFKSKH). 2 disordered regions span residues 425–737 (KLKK…MELP) and 830–1022 (KASK…GKEG). The span at 451–482 (EQAKTKGVDASARRSERPVKGVGKDVPKEKKP) shows a compositional bias: basic and acidic residues. Over residues 484-493 (SNASVVQVTT) the composition is skewed to polar residues. Composition is skewed to basic and acidic residues over residues 498–511 (SAVETKAAEGKHTD) and 554–576 (ESKPKTSGEVPKGSRVEDRKADK). Basic residues predominate over residues 584-600 (KGGKKTALKTKTAKKGS). Residues 630–643 (AVVTPSGSTQTELS) show a composition bias toward polar residues. Pro residues-rich tracts occupy residues 679–706 (PSPPQEPPQVEPPACVEPPPPVEPPCPM) and 713–734 (PSPPMEPSQVEPPPHLEPPLPM). Basic and acidic residues-rich tracts occupy residues 851–860 (RREETPKDQE) and 876–886 (GGTEEAGESRA). Residues 894-904 (STSALSSEQSS) are compositionally biased toward low complexity. Residues 930–943 (TEQKTDRVPLKDSA) are compositionally biased toward basic and acidic residues. Ser948 carries the phosphoserine modification. A compositionally biased stretch (low complexity) spans 957-968 (EAAAPAVVASPP). An interaction with RCOR1 region spans residues 981 to 1059 (EGIHSHDGSD…HLNRHLVNVY (79 aa)). The C2H2-type 9 zinc-finger motif lies at 1032-1054 (FVCIFCDRSFRKEKDYSKHLNRH).

In terms of assembly, isoform 1 and isoform 6 form heterodimers. Isoform 6: Forms homodimers and homooligomers; binds to the neuron-restrictive silencer element (NRSE) as monomer. Interacts with SIN3A, SIN3B and RCOR1. Interacts with CDYL. Interacts with EHMT1 and EHMT2 only in the presence of CDYL. Part of a complex containing at least CDYL, REST, WIZ, SETB1, EHMT1 and EHMT2. Interacts (via zinc-finger DNA-binding domain) with ZFP90 (via N- and C-termini); the interaction inhibits REST repressor activity. Interacts (via C2H2-type zinc finger 5) with PRICKLE1. Interacts with FBXW11 and BTRC. Interacts with USP7. In terms of processing, O-glycosylated. Phosphorylated; phosphorylation is required for ubiquitination. Post-translationally, ubiquitinated; ubiquitination is mediated by BTRC and leads to proteasomal degradation in G2 phase. Ubiquitination increases during neuronal differentiation. Deubiquitinated by USP7; leading to its stabilization and promoting the maintenance of neural progenitor cells. In terms of tissue distribution, expressed in the hippocampus including the granule cell layer of the dentate gyrus, the pyramidal cell layers of CA1 and CA3, the apical and basilar dendrite layers of the stratum radiatum and stratum oriens of CA1, the stratum lucidum and stratum oriens of CA3 and in astroglia (at protein level). Expressed in the brain, with the highest levels in the neurons of hippocampus, pons/medulla and midbrain.

It localises to the nucleus. The protein resides in the cytoplasm. Functionally, transcriptional repressor which binds neuron-restrictive silencer element (NRSE) and represses neuronal gene transcription in non-neuronal cells. Restricts the expression of neuronal genes by associating with two distinct corepressors, SIN3A and RCOR1, which in turn recruit histone deacetylase to the promoters of REST-regulated genes. Mediates repression by recruiting the BHC complex at RE1/NRSE sites which acts by deacetylating and demethylating specific sites on histones, thereby acting as a chromatin modifier. Transcriptional repression by REST-CDYL via the recruitment of histone methyltransferase EHMT2 may be important in transformation suppression. Represses the expression of SRRM4 in non-neural cells to prevent the activation of neural-specific splicing events and to prevent production of REST isoform 6. Repressor activity may be inhibited by forming heterodimers with isoform 6, thereby preventing binding to NRSE or binding to corepressors and leading to derepression of target genes. Also maintains repression of neuronal genes in neural stem cells, and allows transcription and differentiation into neurons by dissociation from RE1/NRSE sites of target genes. Thereby is involved in maintaining the quiescent state of adult hippocampal neural stem cells and preventing premature differentiation into mature neurons. Plays a role in the developmental switch in synaptic NMDA receptor composition during postnatal development, by repressing GRIN2B expression and thereby altering NMDA receptor properties from containing primarily GRIN2B to primarily GRIN2A subunits. Acts as a regulator of osteoblast differentiation. Key repressor of gene expression in hypoxia; represses genes in hypoxia by direct binding to an RE1/NRSE site on their promoter regions. May also function in stress resistance in the brain during aging; possibly by regulating expression of genes involved in cell death and in the stress response. Repressor of gene expression in the hippocampus after ischemia by directly binding to RE1/NRSE sites and recruiting SIN3A and RCOR1 to promoters of target genes, thereby promoting changes in chromatin modifications and ischemia-induced cell death. After ischemia, might play a role in repression of miR-132 expression in hippocampal neurons, thereby leading to neuronal cell death. Its function is as follows. Binds to the 3' region of the neuron-restrictive silencer element (NRSE), with lower affinity than full-length REST isoform 1. Exhibits weaker repressor activity compared to isoform 1. May negatively regulate the repressor activity of isoform 1 by binding to isoform 1, thereby preventing its binding to NRSE and leading to derepression of target genes. However, in another study, does not appear to be implicated in repressor activity of a NRSE motif-containing reporter construct nor in inhibitory activity on the isoform 1 transcriptional repressor activity. Post-transcriptional inactivation of REST by SRRM4-dependent alternative splicing into isoform 6 is required in mechanosensory hair cells in the inner ear for derepression of neuronal genes and hearing. In Rattus norvegicus (Rat), this protein is RE1-silencing transcription factor (Rest).